An 862-amino-acid chain; its full sequence is Taxadiene synthase (862 aa).

Aspartate 613, aspartate 617, asparagine 757, threonine 761, and glutamate 765 together coordinate Mg(2+). The short motif at aspartate 613–aspartate 617 is the DDXXD motif element.

It belongs to the terpene synthase family. Mg(2+) serves as cofactor.

It catalyses the reaction (2E,6E,10E)-geranylgeranyl diphosphate = taxa-4(5),11(12)-diene + diphosphate. Its pathway is alkaloid biosynthesis; taxol biosynthesis; taxa-4(20),11-dien-5alpha-ol from geranylgeranyl diphosphate: step 1/2. Catalyzes the cyclization of the ubiquitous isoprenoid intermediate geranylgeranyl diphosphate to taxa-4,11-diene, the parent olefin with a taxane skeleton. The chain is Taxadiene synthase (TDC1) from Taxus brevifolia (Pacific yew).